The sequence spans 414 residues: DNA primase small subunit PriS (414 aa).

Active-site residues include D98, D100, and D312.

This sequence belongs to the eukaryotic-type primase small subunit family. In terms of assembly, heterodimer of a small subunit (PriS) and a large subunit (PriL). Mg(2+) serves as cofactor. It depends on Mn(2+) as a cofactor.

Its function is as follows. Catalytic subunit of DNA primase, an RNA polymerase that catalyzes the synthesis of short RNA molecules used as primers for DNA polymerase during DNA replication. The small subunit contains the primase catalytic core and has DNA synthesis activity on its own. Binding to the large subunit stabilizes and modulates the activity, increasing the rate of DNA synthesis while decreasing the length of the DNA fragments, and conferring RNA synthesis capability. The DNA polymerase activity may enable DNA primase to also catalyze primer extension after primer synthesis. May also play a role in DNA repair. This chain is DNA primase small subunit PriS, found in Methanosarcina mazei (strain ATCC BAA-159 / DSM 3647 / Goe1 / Go1 / JCM 11833 / OCM 88) (Methanosarcina frisia).